The chain runs to 84 residues: Putative ribosomal RNA large subunit methyltransferase H 2 (84 aa).

Residues G33 and 52–57 (FSKMTF) contribute to the S-adenosyl-L-methionine site.

It belongs to the RNA methyltransferase RlmH family. Homodimer.

It localises to the cytoplasm. The enzyme catalyses pseudouridine(1915) in 23S rRNA + S-adenosyl-L-methionine = N(3)-methylpseudouridine(1915) in 23S rRNA + S-adenosyl-L-homocysteine + H(+). Functionally, specifically methylates the pseudouridine at position 1915 (m3Psi1915) in 23S rRNA. This is Putative ribosomal RNA large subunit methyltransferase H 2 (rlmH2) from Clostridium perfringens (strain SM101 / Type A).